Consider the following 547-residue polypeptide: Glucose-6-phosphate isomerase 2 (547 aa).

The active-site Proton donor is glutamate 351. Active-site residues include histidine 382 and lysine 508.

This sequence belongs to the GPI family.

The protein resides in the cytoplasm. It carries out the reaction alpha-D-glucose 6-phosphate = beta-D-fructose 6-phosphate. The protein operates within carbohydrate biosynthesis; gluconeogenesis. It functions in the pathway carbohydrate degradation; glycolysis; D-glyceraldehyde 3-phosphate and glycerone phosphate from D-glucose: step 2/4. In terms of biological role, catalyzes the reversible isomerization of glucose-6-phosphate to fructose-6-phosphate. The chain is Glucose-6-phosphate isomerase 2 from Neisseria gonorrhoeae (strain ATCC 700825 / FA 1090).